The primary structure comprises 212 residues: Ras-related protein Rab-2A (212 aa).

Residue A2 is modified to N-acetylalanine. Positions 2–19 (AYAYLFKYIIIGDTGVGK) are required for interaction with PRKCI. GTP-binding residues include G16, V17, G18, K19, S20, C21, and T38. A Mg(2+)-binding site is contributed by S20. A Switch 1 motif is present at residues 37–42 (LTIGVE). Mg(2+) is bound by residues T38 and D61. A Switch 2 motif is present at residues 63-72 (AGQESFRSIT). Residues G64, N119, K120, D122, A150, and K151 each coordinate GTP. Residues C211 and C212 are each lipidated (S-geranylgeranyl cysteine).

This sequence belongs to the small GTPase superfamily. Rab family. As to quaternary structure, interacts with PRKCI. Interacts with TRIP11. Interacts (in GTP-bound form) with GARIN1B. Interacts (GTP-bound) with HOPS complex component VPS39; interaction contributes to obtaining a functional HOPS complex that promotes autophagosome-lysosome membrane fusion driven by STX17-SNAP29-VAMP8. May interact with VPS41. Mg(2+) serves as cofactor. In terms of processing, prenylated. Prenylation is required for association with cellular membranes. As to expression, brain and parietal cells.

The protein localises to the endoplasmic reticulum-Golgi intermediate compartment membrane. Its subcellular location is the melanosome. It is found in the endoplasmic reticulum membrane. The protein resides in the golgi apparatus membrane. It localises to the cytoplasmic vesicle. The protein localises to the secretory vesicle. Its subcellular location is the acrosome. It is found in the autophagosome membrane. The catalysed reaction is GTP + H2O = GDP + phosphate + H(+). Its activity is regulated as follows. Regulated by guanine nucleotide exchange factors (GEFs) which promote the exchange of bound GDP for free GTP, GTPase activating proteins (GAPs) which increase the GTP hydrolysis activity, and GDP dissociation inhibitors (GDIs) which inhibit the dissociation of the nucleotide from the GTPase. The small GTPases Rab are key regulators of intracellular membrane trafficking, from the formation of transport vesicles to their fusion with membranes. Rabs cycle between active GTP-bound and inactive GDP-bound states. In their active state, drive transport of vesicular carriers from donor organelles to acceptor organelles to regulate the membrane traffic that maintains organelle identity and morphology. RAB2A regulates autophagy by promoting autophagosome-lysosome fusion via recruitment of the HOPS endosomal tethering complex; this process involves autophagosomal RAB2A and lysosomal RAB39A recruitment of HOPS subcomplexes VPS39-VPS11 and VPS41-VPS16-VPS18-VPS33A, respectively, which assemble into a functional complex to mediate membrane tethering and SNAREs-driven membrane fusion. Required for protein transport from the endoplasmic reticulum to the Golgi complex. Regulates the compacted morphology of the Golgi. Together with RAB2B, redundantly required for efficient autophagic flux. This chain is Ras-related protein Rab-2A (RAB2A), found in Oryctolagus cuniculus (Rabbit).